We begin with the raw amino-acid sequence, 146 residues long: Cytochrome c-type biogenesis protein CcmE (146 aa).

Residues Met-1–Arg-8 lie on the Cytoplasmic side of the membrane. Residues Leu-9 to Ala-29 traverse the membrane as a helical; Signal-anchor for type II membrane protein segment. At Leu-30–His-146 the chain is on the periplasmic side. Heme-binding residues include His-129 and Tyr-133.

This sequence belongs to the CcmE/CycJ family.

Its subcellular location is the cell inner membrane. Functionally, heme chaperone required for the biogenesis of c-type cytochromes. Transiently binds heme delivered by CcmC and transfers the heme to apo-cytochromes in a process facilitated by CcmF and CcmH. This is Cytochrome c-type biogenesis protein CcmE from Aliivibrio salmonicida (strain LFI1238) (Vibrio salmonicida (strain LFI1238)).